We begin with the raw amino-acid sequence, 798 residues long: Cold shock domain-containing protein E1 (798 aa).

One can recognise a CSD 1 domain in the interval 26–87 (ETGVIEKLLT…RTGKPIAIKL (62 aa)). Lys81 carries the N6-acetyllysine modification. Lys91 is covalently cross-linked (Glycyl lysine isopeptide (Lys-Gly) (interchain with G-Cter in SUMO2)). Ser123 bears the Phosphoserine mark. The CSD 2; truncated domain occupies 136–179 (VFYLTYTSEDVEGNVQLETGDKINFVIDNNKHTGAVSARNIMLL). Residues 186–245 (YQGVVCAMKEAFGFIERGDVVKEIFFHYSEFKGDLETLQPGDDVEFTIKDRNGKEVATDV) form the CSD 3 domain. At Ser276 the chain carries Phosphoserine. The region spanning 297–337 (LPFGDKDTKSKVTLLEGDHVRFNISTDRRDKLERATNIEVL) is the CSD 4; truncated domain. CSD domains lie at 349-410 (EMGV…AIRI) and 447-507 (NKGK…ATCV). The residue at position 514 (Ser514) is a Phosphoserine. One can recognise a CSD 7 domain in the interval 519 to 579 (LLGYVATLKD…KGNKVSAEKV (61 aa)). Phosphoserine is present on Ser584. CSD domains lie at 610-670 (PTQI…AYNI) and 674-735 (RRAT…ACNV). Residues 748–789 (PRPDRLVNRLKNITLDDASAPRLMVLRQPRGPDNSMGFGAER) form the SUZ-C domain. Thr761 is modified (phosphothreonine).

It belongs to the UNR family. In terms of assembly, component of a multi subunit autoregulatory ribonucleoprotein complex (ARC), at least composed of IGF2BP1, PABPC1 and CSDE1. Interacts with STRAP. Part of a complex associated with the FOS mCRD domain and consisting of PABPC1, PAIP1, HNRPD and SYNCRIP. The interaction with PABPC1 is direct and RNA-independent. Interacts with EIF4ENIF1/4E-T.

The protein localises to the cytoplasm. It localises to the stress granule. The protein resides in the P-body. RNA-binding protein involved in translationally coupled mRNA turnover. Implicated with other RNA-binding proteins in the cytoplasmic deadenylation/translational and decay interplay of the FOS mRNA mediated by the major coding-region determinant of instability (mCRD) domain. Required for efficient formation of stress granules. This chain is Cold shock domain-containing protein E1, found in Rattus norvegicus (Rat).